The sequence spans 201 residues: ATP-dependent dethiobiotin synthetase BioD (201 aa).

11–16 (DVGKTH) lines the ATP pocket. Residue T15 coordinates Mg(2+). Residue K31 is part of the active site. Residues D40 and 93 to 96 (ELAG) contribute to the ATP site. Mg(2+)-binding residues include D40 and E93.

Belongs to the dethiobiotin synthetase family. As to quaternary structure, homodimer. Mg(2+) serves as cofactor.

The protein localises to the cytoplasm. The catalysed reaction is (7R,8S)-7,8-diammoniononanoate + CO2 + ATP = (4R,5S)-dethiobiotin + ADP + phosphate + 3 H(+). It functions in the pathway cofactor biosynthesis; biotin biosynthesis; biotin from 7,8-diaminononanoate: step 1/2. Functionally, catalyzes a mechanistically unusual reaction, the ATP-dependent insertion of CO2 between the N7 and N8 nitrogen atoms of 7,8-diaminopelargonic acid (DAPA, also called 7,8-diammoniononanoate) to form a ureido ring. In Campylobacter jejuni subsp. jejuni serotype O:6 (strain 81116 / NCTC 11828), this protein is ATP-dependent dethiobiotin synthetase BioD.